A 353-amino-acid polypeptide reads, in one-letter code: Purine nucleoside phosphorylase (353 aa).

The span at 1–16 shows a compositional bias: polar residues; sequence MSKFSYLQNGKASTNG. The disordered stretch occupies residues 1–42; that stretch reads MSKFSYLQNGKASTNGVPHANGHHQQHQNGHSNGVARNGGTA. Phosphate is bound by residues Ser98, His129, 149-151, and Ala181; that span reads RFH. Glu266 serves as a coordination point for a purine D-ribonucleoside. Residue Ser285 coordinates phosphate. A purine D-ribonucleoside is bound at residue Asn308.

The protein belongs to the PNP/MTAP phosphorylase family. As to quaternary structure, homotrimer.

It carries out the reaction inosine + phosphate = alpha-D-ribose 1-phosphate + hypoxanthine. It catalyses the reaction guanosine + phosphate = alpha-D-ribose 1-phosphate + guanine. The catalysed reaction is 2'-deoxyguanosine + phosphate = 2-deoxy-alpha-D-ribose 1-phosphate + guanine. The enzyme catalyses 2'-deoxyinosine + phosphate = 2-deoxy-alpha-D-ribose 1-phosphate + hypoxanthine. The protein operates within purine metabolism; purine nucleoside salvage. Its activity is regulated as follows. Inhibited by 5'-deaza-1'-aza-2c-deoxy-1'-(9-methylene) immucillin-H (DADMe-ImmH). Functionally, as part of the purine salvage pathway, catalyzes the phosphorolytic breakdown of the N-glycosidic bond in the beta-(deoxy)ribonucleoside molecules, with the formation of the corresponding free purine bases and pentose-1-phosphate. Preferentially acts on 2'-deoxyinosine and inosine, and to a lesser extent on 2'-deoxyguanosine and guanosine. Has no activity towards adenosine or 2'-deoxyadenosine. This chain is Purine nucleoside phosphorylase, found in Anopheles gambiae (African malaria mosquito).